The primary structure comprises 773 residues: Carnitine O-palmitoyltransferase 1, liver isoform (773 aa).

Ala2 carries the post-translational modification N-acetylalanine. Residues 2 to 47 lie on the Cytoplasmic side of the membrane; it reads AEAHQAVAFQFTVTPDGIDLRLSHEALKQICLSGLHSWKKKFIRFK. A helical transmembrane segment spans residues 48–73; sequence NGIITGVFPANPSSWLIVVVGVISSM. The Mitochondrial intermembrane segment spans residues 74-102; the sequence is HAKVDPSLGMIAKISRTLDTTGRMSSQTK. The chain crosses the membrane as a helical span at residues 103 to 122; it reads NIVSGVLFGTGLWVAVIMTM. The Cytoplasmic segment spans residues 123–773; sequence RYSLKVLLSY…LFGLTINSKK (651 aa). Tyr282 is subject to 3'-nitrotyrosine. The Proton acceptor role is filled by His473. Residue 555 to 567 coordinates CoA; it reads GKGLIKKCRTSPD. Thr588 carries the post-translational modification Phosphothreonine. Position 589 is a 3'-nitrotyrosine (Tyr589). Residues Tyr589 and Thr602 each coordinate (R)-carnitine. The residue at position 604 (Thr604) is a Phosphothreonine. A phosphoserine mark is found at Ser741 and Ser747.

This sequence belongs to the carnitine/choline acetyltransferase family. As to quaternary structure, homohexamer and homotrimer. Identified in a complex that contains at least CPT1A, ACSL1 and VDAC1. Also identified in complexes with ACSL1 and VDAC2 and VDAC3. Interacts with ZDHHC4. In terms of tissue distribution, liver and kidney.

The protein localises to the mitochondrion outer membrane. The catalysed reaction is (R)-carnitine + hexadecanoyl-CoA = O-hexadecanoyl-(R)-carnitine + CoA. The enzyme catalyses succinyl-CoA + L-lysyl-[protein] = N(6)-succinyl-L-lysyl-[protein] + CoA + H(+). It functions in the pathway lipid metabolism; fatty acid beta-oxidation. Its activity is regulated as follows. Inhibited by malonyl-CoA. In terms of biological role, catalyzes the transfer of the acyl group of long-chain fatty acid-CoA conjugates onto carnitine, an essential step for the mitochondrial uptake of long-chain fatty acids and their subsequent beta-oxidation in the mitochondrion. Also possesses a lysine succinyltransferase activity that can regulate enzymatic activity of substrate proteins such as ENO1 and metabolism independent of its classical carnitine O-palmitoyltransferase activity. Plays an important role in hepatic triglyceride metabolism. Also plays a role in inducible regulatory T-cell (iTreg) differentiation once activated by butyryl-CoA that antagonizes malonyl-CoA-mediated CPT1A repression. Sustains the IFN-I response by recruiting ZDHCC4 to palmitoylate MAVS at the mitochondria leading to MAVS stabilization and activation. The sequence is that of Carnitine O-palmitoyltransferase 1, liver isoform (Cpt1a) from Rattus norvegicus (Rat).